The chain runs to 570 residues: Proline--tRNA ligase (570 aa).

Belongs to the class-II aminoacyl-tRNA synthetase family. ProS type 1 subfamily. In terms of assembly, homodimer.

Its subcellular location is the cytoplasm. The enzyme catalyses tRNA(Pro) + L-proline + ATP = L-prolyl-tRNA(Pro) + AMP + diphosphate. Its function is as follows. Catalyzes the attachment of proline to tRNA(Pro) in a two-step reaction: proline is first activated by ATP to form Pro-AMP and then transferred to the acceptor end of tRNA(Pro). As ProRS can inadvertently accommodate and process non-cognate amino acids such as alanine and cysteine, to avoid such errors it has two additional distinct editing activities against alanine. One activity is designated as 'pretransfer' editing and involves the tRNA(Pro)-independent hydrolysis of activated Ala-AMP. The other activity is designated 'posttransfer' editing and involves deacylation of mischarged Ala-tRNA(Pro). The misacylated Cys-tRNA(Pro) is not edited by ProRS. The sequence is that of Proline--tRNA ligase from Syntrophomonas wolfei subsp. wolfei (strain DSM 2245B / Goettingen).